A 256-amino-acid chain; its full sequence is Small ribosomal subunit protein eS1 (256 aa).

Ala-2 is subject to N-acetylalanine; partial.

Belongs to the eukaryotic ribosomal protein eS1 family. In terms of assembly, component of the small ribosomal subunit. Mature ribosomes consist of a small (40S) and a large (60S) subunit. The 40S subunit contains about 33 different proteins and 1 molecule of RNA (18S). The 60S subunit contains about 49 different proteins and 3 molecules of RNA (25S, 5.8S and 5S).

The protein resides in the cytoplasm. The chain is Small ribosomal subunit protein eS1 from Eremothecium gossypii (strain ATCC 10895 / CBS 109.51 / FGSC 9923 / NRRL Y-1056) (Yeast).